Reading from the N-terminus, the 239-residue chain is 4-hydroxy-tetrahydrodipicolinate reductase (239 aa).

NAD(+) is bound by residues Asp-32, 73 to 75 (GTT), and 98 to 101 (ASNF). His-133 (proton donor/acceptor) is an active-site residue. His-134 lines the (S)-2,3,4,5-tetrahydrodipicolinate pocket. Lys-137 (proton donor) is an active-site residue. 143–144 (GT) serves as a coordination point for (S)-2,3,4,5-tetrahydrodipicolinate.

It belongs to the DapB family.

It is found in the cytoplasm. It catalyses the reaction (S)-2,3,4,5-tetrahydrodipicolinate + NAD(+) + H2O = (2S,4S)-4-hydroxy-2,3,4,5-tetrahydrodipicolinate + NADH + H(+). It carries out the reaction (S)-2,3,4,5-tetrahydrodipicolinate + NADP(+) + H2O = (2S,4S)-4-hydroxy-2,3,4,5-tetrahydrodipicolinate + NADPH + H(+). It participates in amino-acid biosynthesis; L-lysine biosynthesis via DAP pathway; (S)-tetrahydrodipicolinate from L-aspartate: step 4/4. Functionally, catalyzes the conversion of 4-hydroxy-tetrahydrodipicolinate (HTPA) to tetrahydrodipicolinate. The polypeptide is 4-hydroxy-tetrahydrodipicolinate reductase (Christiangramia forsetii (strain DSM 17595 / CGMCC 1.15422 / KT0803) (Gramella forsetii)).